The sequence spans 767 residues: 5-methyltetrahydropteroyltriglutamate--homocysteine methyltransferase (767 aa).

5-methyltetrahydropteroyltri-L-glutamate-binding positions include 17-20 and K117; that span reads RELK. Residues 442–444 and E495 contribute to the L-homocysteine site; that span reads IGS. L-methionine contacts are provided by residues 442 to 444 and E495; that span reads IGS. 5-methyltetrahydropteroyltri-L-glutamate contacts are provided by residues 526–527 and W572; that span reads RC. D610 contributes to the L-homocysteine binding site. Residue D610 coordinates L-methionine. E616 serves as a coordination point for 5-methyltetrahydropteroyltri-L-glutamate. Zn(2+)-binding residues include H653, C655, and E677. H706 serves as the catalytic Proton donor. C738 lines the Zn(2+) pocket.

The protein belongs to the vitamin-B12 independent methionine synthase family. Requires Zn(2+) as cofactor.

The enzyme catalyses 5-methyltetrahydropteroyltri-L-glutamate + L-homocysteine = tetrahydropteroyltri-L-glutamate + L-methionine. It participates in amino-acid biosynthesis; L-methionine biosynthesis via de novo pathway; L-methionine from L-homocysteine (MetE route): step 1/1. In terms of biological role, catalyzes the transfer of a methyl group from 5-methyltetrahydrofolate to homocysteine resulting in methionine formation. In Bifidobacterium animalis subsp. lactis (strain AD011), this protein is 5-methyltetrahydropteroyltriglutamate--homocysteine methyltransferase.